The sequence spans 504 residues: Endosomal/lysosomal proton channel TMEM175 (504 aa).

A disordered region spans residues 1-27 (MSQPRTPEQALDTPGDCPPGRRDEDAG). Topologically, residues 1–33 (MSQPRTPEQALDTPGDCPPGRRDEDAGEGIQCS) are cytoplasmic. T6 is subject to Phosphothreonine. The chain crosses the membrane as a helical span at residues 34–56 (QRMLSFSDALLSIIATVMILPVT). The RxxxFSD motif 1 motif lies at 35 to 41 (RMLSFSD). The Lumenal segment spans residues 57-77 (HTEISPEQQFDRSVQRLLATR). The short helix H1-1 stretch occupies residues 58–63 (TEISPE). A short helix H2-1 region spans residues 65 to 71 (QFDRSVQ). Residues 78–100 (IAVYLMTFLIVTVAWAAHTRLFQ) traverse the membrane as a helical segment. The Cytoplasmic portion of the chain corresponds to 101–106 (VVGKTD). A helical transmembrane segment spans residues 107 to 128 (DTLALLNLACMMTITFLPYTFS). Residues 129–138 (LMVTFPDVPL) are Lumenal-facing. A helical membrane pass occupies residues 139–160 (GIFLFCVCVIAIGVVQALIVGY). Residues 161–184 (AFHFPHLLSPQIQRSAHRALYRRH) are Cytoplasmic-facing. The helical transmembrane segment at 185-205 (VLGIVLQGPALCFAAAIFSLF) threads the bilayer. The Lumenal segment spans residues 206–210 (FVPLS). Residues 211–230 (YLLMVTVILLPYVSKVTGWC) form a helical membrane-spanning segment. Residues 231 to 257 (RDRLLGHREPSAHPVEVFSFDLHEPLS) lie on the Cytoplasmic side of the membrane. Residues 258 to 282 (KERVEAFSDGVYAIVATLLILDICE) form a helical membrane-spanning segment. Residues 260-266 (RVEAFSD) carry the RxxxFSD motif 2 motif. The Lumenal portion of the chain corresponds to 283 to 309 (DNVPDPKDVKERFSGSLVAALSATGPR). Positions 288 to 296 (PKDVKERFS) are short helix H1-2. Positions 298 to 304 (SLVAALS) are short helix H2-2. Residues 310–332 (FLAYFGSFATVGLLWFAHHSLFL) traverse the membrane as a helical segment. Topologically, residues 333 to 338 (HVRKAT) are cytoplasmic. A helical membrane pass occupies residues 339–360 (RAMGLLNTLSLAFVGGLPLAYQ). Residues 361-375 (QTSAFARQPRDELER) are Lumenal-facing. A helical transmembrane segment spans residues 376-396 (VRVSCTIIFLASIFQLAMWTT). Residues 397 to 416 (ALLHQAETLQPSVWFGGREH) are Cytoplasmic-facing. A helical membrane pass occupies residues 417 to 440 (VLMFAKLALYPCASLLAFASTCLL). The Lumenal segment spans residues 441–442 (SR). The helical transmembrane segment at 443–469 (FSVGIFHLMQIAVPCAFLLLRLLVGLA) threads the bilayer. Residues 470 to 504 (LATLRVLRGLARPEHPPPAPTGQDDPQSQLLPAPC) are Cytoplasmic-facing. The interval 483-504 (EHPPPAPTGQDDPQSQLLPAPC) is disordered. The span at 493-504 (DDPQSQLLPAPC) shows a compositional bias: polar residues.

It belongs to the TMEM175 family. Homodimer. Interacts with AKT (AKT1, AKT2 or AKT3); leading to formation of the lysoK(GF) complex, which activates the channel. Interacts with LAMP1; inhibiting the proton channel activity of TMEM175. Interacts with LAMP2; inhibiting the proton channel activity of TMEM175. In terms of tissue distribution, widely expressed.

It is found in the endosome membrane. The protein resides in the lysosome membrane. It catalyses the reaction H(+)(in) = H(+)(out). The enzyme catalyses K(+)(in) = K(+)(out). Active at low pH (under pH 4.6): proton channel activity is activated by luminal side protons. Polyunsaturated fatty acids, such as arachidonic acid, also activate the channel activity. Proton channel activity is directly inhibited by LAMP1 or LAMP2, facilitating lysosomal acidification. Channel activity is activated following interaction with AKT (AKT1, AKT2 or AKT3): interaction promotes activation from closed to an open state. Activation by AKT is independent of AKT serine/threonine-protein kinase activity. In terms of biological role, proton-activated proton channel that catalyzes proton efflux from endosomes and lysosomes to maintain a steady-state pH. Activated at low pH (under pH 4.6) by luminal side protons: selectively mediates lysosomal proton release from lysosomes, eliciting a proton leak that balances V-ATPase activity to maintain pH homeostasis. Regulation of lumenal pH stability is required for autophagosome-lysosome fusion. Also acts as a potassium channel at higher pH, regulating potassium conductance in endosomes and lysosomes. Constitutes the pore-forming subunit of the lysoK(GF) complex, a complex activated by extracellular growth factors. The lysoK(GF) complex is composed of TMEM175 and AKT (AKT1, AKT2 or AKT3), a major target of growth factor receptors: in the complex, TMEM175 channel is opened by conformational changes by AKT, leading to its activation. The lysoK(GF) complex is required to protect neurons against stress-induced damage. This Homo sapiens (Human) protein is Endosomal/lysosomal proton channel TMEM175.